Reading from the N-terminus, the 301-residue chain is Glycine--tRNA ligase alpha subunit (301 aa).

The protein belongs to the class-II aminoacyl-tRNA synthetase family. In terms of assembly, tetramer of two alpha and two beta subunits.

The protein resides in the cytoplasm. It carries out the reaction tRNA(Gly) + glycine + ATP = glycyl-tRNA(Gly) + AMP + diphosphate. This chain is Glycine--tRNA ligase alpha subunit, found in Actinobacillus pleuropneumoniae serotype 5b (strain L20).